A 939-amino-acid chain; its full sequence is AP-2 complex subunit alpha-2 (939 aa).

A 1,2-diacyl-sn-glycero-3-phospho-(1D-myo-inositol-3,4,5-trisphosphate) is bound by residues 11 to 12, K43, Y53, and 57 to 61; these read RG and KYVCK. The segment at 612 to 681 is disordered; it reads LAKLKKKKGP…AGPPPSSGGS (70 aa). Residues 646–667 are compositionally biased toward low complexity; sequence PASTSAVSTPSPSADLLGLGAA. Pro residues predominate over residues 668–677; sequence PPAPAGPPPS.

The protein belongs to the adaptor complexes large subunit family. As to quaternary structure, adaptor protein complex 2 (AP-2) is a heterotetramer composed of two large adaptins (alpha-type subunit AP2A1 or AP2A2 and beta-type subunit AP2B1), a medium adaptin (mu-type subunit AP2M1) and a small adaptin (sigma-type subunit AP2S1). Binds EPN1, EPS15, AMPH, SNAP91 and BIN1. Interacts with HIP1. Interacts with DGKD. Interacts with DENND1A, DENND1B and DENND1C. Interacts with FCHO1 and DAB2. Interacts with ATAT1; this interaction is required for efficient alpha-tubulin acetylation by ATAT1. Interacts with KIAA1107. Together with AP2B1 and AP2M1, it interacts with ADAM10; this interaction facilitates ADAM10 endocytosis from the plasma membrane during long-term potentiation in hippocampal neurons. Interacts with CLN3 (via dileucine motif). Interacts with ABCB11; this interaction regulates cell membrane expression of ABCB11 through its internalization in a clathrin-dependent manner and its subsequent degradation. Interacts with Cacfd1. Interacts with DNAJC6. Expressed in the brain (at protein level).

It localises to the cell membrane. The protein localises to the membrane. The protein resides in the coated pit. Its function is as follows. Component of the adaptor protein complex 2 (AP-2). Adaptor protein complexes function in protein transport via transport vesicles in different membrane traffic pathways. Adaptor protein complexes are vesicle coat components and appear to be involved in cargo selection and vesicle formation. AP-2 is involved in clathrin-dependent endocytosis in which cargo proteins are incorporated into vesicles surrounded by clathrin (clathrin-coated vesicles, CCVs) which are destined for fusion with the early endosome. The clathrin lattice serves as a mechanical scaffold but is itself unable to bind directly to membrane components. Clathrin-associated adaptor protein (AP) complexes which can bind directly to both the clathrin lattice and to the lipid and protein components of membranes are considered to be the major clathrin adaptors contributing the CCV formation. AP-2 also serves as a cargo receptor to selectively sort the membrane proteins involved in receptor-mediated endocytosis. AP-2 seems to play a role in the recycling of synaptic vesicle membranes from the presynaptic surface. AP-2 recognizes Y-X-X-[FILMV] (Y-X-X-Phi) and [ED]-X-X-X-L-[LI] endocytosis signal motifs within the cytosolic tails of transmembrane cargo molecules. AP-2 may also play a role in maintaining normal post-endocytic trafficking through the ARF6-regulated, non-clathrin pathway. During long-term potentiation in hippocampal neurons, AP-2 is responsible for the endocytosis of ADAM10. The AP-2 alpha subunit binds polyphosphoinositide-containing lipids, positioning AP-2 on the membrane. The AP-2 alpha subunit acts via its C-terminal appendage domain as a scaffolding platform for endocytic accessory proteins. The AP-2 alpha and AP-2 sigma subunits are thought to contribute to the recognition of the [ED]-X-X-X-L-[LI] motif. This chain is AP-2 complex subunit alpha-2 (AP2A2), found in Homo sapiens (Human).